The primary structure comprises 196 residues: Ribonuclease H (196 aa).

The RNase H type-1 domain occupies L58–K196. Residues D71, E109, D132, and D192 each contribute to the Mg(2+) site.

Belongs to the RNase H family. Mn(2+) is required as a cofactor. The cofactor is Mg(2+).

Its subcellular location is the cytoplasm. The enzyme catalyses Endonucleolytic cleavage to 5'-phosphomonoester.. Endonuclease that specifically degrades the RNA of RNA-DNA hybrids. This is Ribonuclease H (rnhA) from Halalkalibacterium halodurans (strain ATCC BAA-125 / DSM 18197 / FERM 7344 / JCM 9153 / C-125) (Bacillus halodurans).